Consider the following 260-residue polypeptide: Phosphate import ATP-binding protein PstB 5 (260 aa).

Positions 9-255 constitute an ABC transporter domain; sequence IKVKDLSFYY…PLDSRTRDYV (247 aa). 41–48 lines the ATP pocket; it reads GPSGCGKS.

This sequence belongs to the ABC transporter superfamily. Phosphate importer (TC 3.A.1.7) family. The complex is composed of two ATP-binding proteins (PstB), two transmembrane proteins (PstC and PstA) and a solute-binding protein (PstS).

It is found in the cell inner membrane. It catalyses the reaction phosphate(out) + ATP + H2O = ADP + 2 phosphate(in) + H(+). Its function is as follows. Part of the ABC transporter complex PstSACB involved in phosphate import. Responsible for energy coupling to the transport system. The polypeptide is Phosphate import ATP-binding protein PstB 5 (Trichormus variabilis (strain ATCC 29413 / PCC 7937) (Anabaena variabilis)).